A 102-amino-acid polypeptide reads, in one-letter code: Small ribosomal subunit protein uS10 (102 aa).

It belongs to the universal ribosomal protein uS10 family. Part of the 30S ribosomal subunit.

Its function is as follows. Involved in the binding of tRNA to the ribosomes. The protein is Small ribosomal subunit protein uS10 of Nitrosospira multiformis (strain ATCC 25196 / NCIMB 11849 / C 71).